We begin with the raw amino-acid sequence, 302 residues long: Glycine--tRNA ligase alpha subunit (302 aa).

Belongs to the class-II aminoacyl-tRNA synthetase family. As to quaternary structure, tetramer of two alpha and two beta subunits.

The protein resides in the cytoplasm. It catalyses the reaction tRNA(Gly) + glycine + ATP = glycyl-tRNA(Gly) + AMP + diphosphate. In Haemophilus ducreyi (strain 35000HP / ATCC 700724), this protein is Glycine--tRNA ligase alpha subunit.